A 183-amino-acid polypeptide reads, in one-letter code: NAD(P)H-quinone oxidoreductase subunit J (183 aa).

Residues 1 to 21 are disordered; that stretch reads MAEENAQEKQAPPSAGEQSEP.

The protein belongs to the complex I 30 kDa subunit family. As to quaternary structure, NDH-1 can be composed of about 15 different subunits; different subcomplexes with different compositions have been identified which probably have different functions.

It is found in the cellular thylakoid membrane. The enzyme catalyses a plastoquinone + NADH + (n+1) H(+)(in) = a plastoquinol + NAD(+) + n H(+)(out). It catalyses the reaction a plastoquinone + NADPH + (n+1) H(+)(in) = a plastoquinol + NADP(+) + n H(+)(out). Its function is as follows. NDH-1 shuttles electrons from an unknown electron donor, via FMN and iron-sulfur (Fe-S) centers, to quinones in the respiratory and/or the photosynthetic chain. The immediate electron acceptor for the enzyme in this species is believed to be plastoquinone. Couples the redox reaction to proton translocation, and thus conserves the redox energy in a proton gradient. Cyanobacterial NDH-1 also plays a role in inorganic carbon-concentration. The protein is NAD(P)H-quinone oxidoreductase subunit J of Synechococcus sp. (strain JA-2-3B'a(2-13)) (Cyanobacteria bacterium Yellowstone B-Prime).